A 209-amino-acid chain; its full sequence is GTP-binding protein RHB1 (209 aa).

Met1 bears the N-acetylmethionine mark. Residues Gly28, Lys29, Thr30, Thr31, Val42, Tyr45, Thr48, Asp132, and Ala172 each contribute to the GTP site. Thr30 is a Mg(2+) binding site. Residues 45–53 (YYPTIENEF) carry the Effector region motif. Mg(2+) is bound at residue Thr48. Cys206 bears the Cysteine methyl ester mark. The S-farnesyl cysteine moiety is linked to residue Cys206. Residues 207–209 (SIM) constitute a propeptide, removed in mature form.

It belongs to the small GTPase superfamily. Rheb family. As to quaternary structure, interacts with BTN2.

It is found in the cell membrane. It catalyses the reaction GTP + H2O = GDP + phosphate + H(+). Its function is as follows. Binds GTP and exhibits intrinsic GTPase activity. Involved in the regulation of arginine and lysine uptake. Acts through the CAN1 permease. The chain is GTP-binding protein RHB1 (RHB1) from Saccharomyces cerevisiae (strain ATCC 204508 / S288c) (Baker's yeast).